Reading from the N-terminus, the 1604-residue chain is Calmodulin-regulated spectrin-associated protein 1 (1604 aa).

At serine 216 the chain carries Phosphoserine. In terms of domain architecture, Calponin-homology (CH) spans 235 to 350; sequence PVDFARVVRY…FIAELFWWFE (116 aa). Residues serine 390, serine 394, and serine 435 each carry the phosphoserine modification. The segment at 394 to 413 is disordered; that stretch reads SPAAMSPADLPPSTQPLTEG. The segment at 444–491 is disordered; that stretch reads RQKQQKVSQAEEIPDQRHRSNSLTRADGQPRGAAIAWPDKKNRPVSQP. A Phosphothreonine modification is found at threonine 531. A phosphoserine mark is found at serine 571, serine 574, serine 581, serine 593, serine 607, serine 647, serine 739, serine 745, serine 755, and serine 757. Residues 642 to 671 are disordered; it reads MAKRPSEGSQPLVRKKVTGSHGSRDLNRTF. The segment covering 784-806 has biased composition (basic and acidic residues); the sequence is EEESAKLQEDMKVKEHEDKDDAS. 2 disordered regions span residues 784–824 and 842–888; these read EEES…SMSM and LNSC…KDPA. Composition is skewed to low complexity over residues 813–824 and 847–858; these read LSTTSQLSSMSM and TKSSTSSSQKTT. Residues 874-886 are compositionally biased toward basic and acidic residues; it reads QKREQSPSRHSKD. Positions 888 to 909 are sufficient for interaction with SPTBN1; sequence ASLLASELVQLHMQLEEKRRAI. 2 coiled-coil regions span residues 890 to 926 and 1026 to 1058; these read LLAS…QRLK and DVNE…QEQL. The sufficient for interaction with calmodulin stretch occupies residues 920-939; the sequence is SARQRLKLGKAAFLHVVKKG. Disordered stretches follow at residues 1085–1163, 1246–1271, and 1298–1448; these read FVEP…GELP, PDED…KPGV, and RKAE…DRDW. Serine 1090 is subject to Phosphoserine. The segment covering 1113–1124 has biased composition (basic and acidic residues); the sequence is RPAELKVPKDRQ. The segment covering 1125–1137 has biased composition (polar residues); it reads QGCSRSKTPTPSV. Position 1154 is a phosphoserine (serine 1154). 2 stretches are compositionally biased toward basic and acidic residues: residues 1246–1258 and 1298–1348; these read PDED…HESS and RKAE…EYLR. The stretch at 1286–1357 forms a coiled coil; the sequence is AKKRAAFLLK…RRKQQQALEE (72 aa). A compositionally biased stretch (basic residues) spans 1363-1374; it reads PKSKPKKPRPKS. The segment covering 1382–1394 has biased composition (polar residues); sequence SDSGTKCSSTPDN. Over residues 1395–1412 the composition is skewed to low complexity; the sequence is LSQTHSGSSLSLASAATT. 2 positions are modified to phosphoserine: serine 1400 and serine 1429. The 135-residue stretch at 1465 to 1599 folds into the CKK domain; it reads GPKLFKEPSS…QPKRPTVPKK (135 aa). Tyrosine 1539 is subject to Phosphotyrosine.

This sequence belongs to the CAMSAP1 family. In terms of assembly, interacts with spectrin via SPTBN1; the interaction is direct. Interacts with calmodulin; calcium-dependent it prevents interaction with spectrin. In brain, specifically expressed in astrocytes (at protein level).

The protein resides in the cytoplasm. Its subcellular location is the cytoskeleton. In terms of biological role, key microtubule-organizing protein that specifically binds the minus-end of non-centrosomal microtubules and regulates their dynamics and organization. Specifically recognizes growing microtubule minus-ends and stabilizes microtubules. Acts on free microtubule minus-ends that are not capped by microtubule-nucleating proteins or other factors and protects microtubule minus-ends from depolymerization. In contrast to CAMSAP2 and CAMSAP3, tracks along the growing tips of minus-end microtubules without significantly affecting the polymerization rate: binds at the very tip of the microtubules minus-end and acts as a minus-end tracking protein (-TIP) that dissociates from microtubules after allowing tubulin incorporation. Through interaction with spectrin may regulate neurite outgrowth. This Rattus norvegicus (Rat) protein is Calmodulin-regulated spectrin-associated protein 1 (Camsap1).